A 185-amino-acid polypeptide reads, in one-letter code: Probable nicotinate-nucleotide adenylyltransferase (185 aa).

Belongs to the NadD family.

It catalyses the reaction nicotinate beta-D-ribonucleotide + ATP + H(+) = deamido-NAD(+) + diphosphate. It participates in cofactor biosynthesis; NAD(+) biosynthesis; deamido-NAD(+) from nicotinate D-ribonucleotide: step 1/1. In terms of biological role, catalyzes the reversible adenylation of nicotinate mononucleotide (NaMN) to nicotinic acid adenine dinucleotide (NaAD). The protein is Probable nicotinate-nucleotide adenylyltransferase of Methylorubrum extorquens (strain PA1) (Methylobacterium extorquens).